Consider the following 316-residue polypeptide: Probable cell division protein WhiA (316 aa).

Residues 280–313 (SLKELGEMLEPPVGKSGVNHRLRKIEKIAEELRT) constitute a DNA-binding region (H-T-H motif).

Belongs to the WhiA family.

Its function is as follows. Involved in cell division and chromosome segregation. The protein is Probable cell division protein WhiA of Clostridium perfringens (strain 13 / Type A).